The following is a 157-amino-acid chain: Phosphopantetheine adenylyltransferase (157 aa).

Serine 9 is a substrate binding site. ATP-binding positions include 9–10 and histidine 17; that span reads SF. 3 residues coordinate substrate: lysine 41, leucine 74, and lysine 88. ATP-binding positions include 89–91, glutamate 99, and 123–129; these read GLR and YTHVSSS.

The protein belongs to the bacterial CoaD family. Homohexamer. Requires Mg(2+) as cofactor.

Its subcellular location is the cytoplasm. The enzyme catalyses (R)-4'-phosphopantetheine + ATP + H(+) = 3'-dephospho-CoA + diphosphate. It participates in cofactor biosynthesis; coenzyme A biosynthesis; CoA from (R)-pantothenate: step 4/5. In terms of biological role, reversibly transfers an adenylyl group from ATP to 4'-phosphopantetheine, yielding dephospho-CoA (dPCoA) and pyrophosphate. The protein is Phosphopantetheine adenylyltransferase of Micrococcus luteus (strain ATCC 4698 / DSM 20030 / JCM 1464 / CCM 169 / CCUG 5858 / IAM 1056 / NBRC 3333 / NCIMB 9278 / NCTC 2665 / VKM Ac-2230) (Micrococcus lysodeikticus).